Consider the following 182-residue polypeptide: Large ribosomal subunit protein uL16 (182 aa).

It belongs to the universal ribosomal protein uL16 family.

This is Large ribosomal subunit protein uL16 from Thermococcus onnurineus (strain NA1).